The primary structure comprises 518 residues: Cytochrome P450 monooxygenase pyr3 (518 aa).

The chain crosses the membrane as a helical span at residues 26–46 (GVAIVLFLAPLALHLVSSYLF). Cysteine 458 provides a ligand contact to heme.

This sequence belongs to the cytochrome P450 family. Heme serves as cofactor.

It localises to the membrane. It participates in secondary metabolite biosynthesis; terpenoid biosynthesis. Functionally, cytochrome P450 monooxygenase; part of the gene cluster that mediates the biosynthesis of pyripyropene A, a specific human acyl-coenzyme A:cholesterol acyltransferase 2 inhibitor. The first step of the pathway is the synthesis of nicotinyl-CoA from nicotinic acid by the nicotinic acid-CoA ligase pyr1. Nicotinyl-CoA is then a substrate of polyketide synthase pyr2 to produce 4-hydroxy-6-(3-pyridinyl)-2H-pyran-2-one (HPPO) which is further prenylated by the polyprenyl transferase pyr6 to yield farnesyl-HPPO. The next steps consist of an epoxidation of farnesyl-HPPO to epoxyfarnesyl-HPPO by FAD-dependent monooxygenase pyr5 and a cyclization of the terpenoid portion by the terpene cyclase pyr4 to yield deacetyl-pyripyropene E. The 2 cytochrome P450 monooxygenases pyr3 and pyr9, and the 2 acetyltransferases pyr7 and pyr8 are involved in the conversion of deacetyl-pyripyropene E into pyripyropene A through several cycles of oxidation and acetylation steps. Pyr7 acetylates deacetyl-pyripyropene E to pyripyropene E which is oxidized to 11-deacetyl-pyripyropene O by pyr3, which is in turn acetylated into pyripyropene O by pyr8. Pyripyropene O is then oxidized to deacetyl-pyripyropene A by pyr9. Deacetyl-pyripyropene A is finally acetylated to pyripyropene A by pyr8. The protein is Cytochrome P450 monooxygenase pyr3 of Aspergillus fumigatus (strain ATCC MYA-4609 / CBS 101355 / FGSC A1100 / Af293) (Neosartorya fumigata).